Reading from the N-terminus, the 459-residue chain is Autophagy-related protein 18 (459 aa).

WD repeat units lie at residues 1 to 39 and 188 to 228; these read MTSPALNFITFNQDHSCLAVGTSKGFRIYHTDPFSRIFS and AHRS…KLYQ. The segment at 229 to 232 is necessary for proper localization to vacuole membrane; that stretch reads FRRG. Positions 229–233 match the L/FRRG motif motif; the sequence is FRRGT. The stretch at 233 to 272 is one WD 3 repeat; that stretch reads TYPSTIYSMSFNLSSTLLCVSSTSDTIHIFRLGAPPGNTT. A disordered region spans residues 264–339; sequence LGAPPGNTTP…RGSGSFSSML (76 aa). The segment covering 265–277 has biased composition (low complexity); it reads GAPPGNTTPAGAP. The segment covering 285–296 has biased composition (basic and acidic residues); the sequence is RQDRWSRARSYD. Over residues 319–330 the composition is skewed to gly residues; sequence PGAGNNQGGHTR. Residues 393–433 form a WD 4 repeat; it reads APGGPLRSVVAMSSSSPQVMVVTSDGGFYVYNIDMEHGGEG.

This sequence belongs to the WD repeat PROPPIN family. As to quaternary structure, component of the PI(3,5)P2 regulatory complex. Interacts with ATG2 and ATG9. The ATG2-ATG18 complex is essential for autophagosome formation.

It is found in the preautophagosomal structure membrane. The protein resides in the vacuole membrane. The protein localises to the endosome membrane. Functionally, component of the PI(3,5)P2 regulatory complex that regulates both the synthesis and turnover of phosphatidylinositol 3,5-bisphosphate (PtdIns(3,5)P2). Plays an important role in osmotically-induced vacuole fragmentation. Required for cytoplasm to vacuole transport (Cvt) vesicle formation, pexophagy and starvation-induced autophagy. Involved in correct ATG9 trafficking to the pre-autophagosomal structure. With ATG2, protects ATG8 from ATG4-mediated cleavage. Autophagy is required for proper vegetative growth, asexual/sexual reproduction, and full virulence. Autophagy is particularly involved in the biosynthesis of deoxynivalenol (DON), an important virulence determinant. The polypeptide is Autophagy-related protein 18 (Gibberella zeae (strain ATCC MYA-4620 / CBS 123657 / FGSC 9075 / NRRL 31084 / PH-1) (Wheat head blight fungus)).